Consider the following 2274-residue polypeptide: Adenomatous polyposis coli protein 2 (2274 aa).

A coiled-coil region spans residues 5-59; the sequence is MASYEQLVRQVEALKAENTHLRQELRDNSSHLSKLETETSGMKEVLKHLQGKLEQ. 2 disordered regions span residues 97-120 and 248-269; these read GPEP…KDSF and VEEE…QPGN. ARM repeat units follow at residues 301–341, 472–511, 515–555, 557–602, 608–647, and 650–689; these read PESC…GAKD, ANKA…NLSW, INSK…NLSA, STEN…NVSS, EDYR…NLSA, and PRDQ…NLLA. A coiled-coil region spans residues 832–856; sequence AAKAKAKLALAVARIDRLVEDISAL. Disordered stretches follow at residues 859 to 901, 1061 to 1143, and 1165 to 1216; these read SSDD…GSRA, CSSL…NCVQ, and SIAS…TSQF. The segment covering 861 to 870 has biased composition (low complexity); sequence DDSFSLSSGD. Copy 1 of the repeat occupies 1049–1068; that stretch reads LVAQDGPMSLSRCSSLSSLS. The segment at 1049–1565 is 5 X 20 AA approximate repeat of F-X-V-E-X-T-P-X-C-F-S-R-X-S-S-L-S-S-L-S; it reads LVAQDGPMSL…SLTSSASSLS (517 aa). The interval 1049-1565 is interaction with CTNNB1; that stretch reads LVAQDGPMSL…SLTSSASSLS (517 aa). A compositionally biased stretch (polar residues) spans 1077–1086; it reads QAENLDSDSS. Positions 1092–1103 are enriched in low complexity; that stretch reads EAGPGEAELGRA. Polar residues predominate over residues 1133-1143; it reads TPSSSSENCVQ. The stretch at 1140–1159 is repeat 2; the sequence is NCVQETPLVLSRCSSVSSLG. Repeat 3 spans residues 1250–1269; that stretch reads FTVEKPDENFSCASSLSALA. Disordered regions lie at residues 1290–1323, 1368–1480, 1493–1631, 1699–2003, 2022–2122, and 2135–2274; these read ERAV…SATD, RGDD…LQSL, FYDS…DIRP, STLQ…RGRP, PRQP…IKDE, and TALP…SLLE. A compositionally biased stretch (polar residues) spans 1374 to 1397; sequence TDSAEGTPVNFSSAASLSDETLQG. Repeat 4 spans residues 1375-1394; it reads DSAEGTPVNFSSAASLSDET. Over residues 1399–1411 the composition is skewed to basic and acidic residues; the sequence is SRDKPAGPGDRQK. Polar residues predominate over residues 1455–1470; it reads RPQSARSNRDSSCQTR. The span at 1517–1529 shows a compositional bias: basic and acidic residues; that stretch reads LKREKPAGRKETP. Residues 1546 to 1565 form repeat 5; it reads LIVDETPPCYSLTSSASSLS. Low complexity predominate over residues 1556 to 1574; that stretch reads SLTSSASSLSEPEAPEQPA. A phosphoserine mark is found at Ser1563 and Ser1565. Residues 1608-1624 show a composition bias toward basic residues; that stretch reads PRRRTQVPGSRRRKPRA. Composition is skewed to low complexity over residues 1780 to 1795 and 1839 to 1868; these read SGPC…SGTT and LAKT…TPTG. A required for localization to microtubules and function in microtubule stabilization region spans residues 1792-1871; sequence SGTTQPETVT…PLATPTGGPL (80 aa). At Ser1861 the chain carries Phosphoserine. Positions 1910–1921 are enriched in pro residues; that stretch reads RVPPPLARPSPE. Composition is skewed to low complexity over residues 1945-1955 and 1983-1997; these read RMASARSSGSE and LSSA…QAAS. Positions 2037-2114 are interaction with MAPRE1 and MAPRE3; the sequence is GLAPLAPRRT…PLPRVAPPGT (78 aa). The segment covering 2165-2179 has biased composition (polar residues); it reads DVATSKTNSSTSPSL.

This sequence belongs to the adenomatous polyposis coli (APC) family. In terms of assembly, interacts with PSRC1. Interacts with MAPRE3. Interacts with APC, CTNNB1, TP53BP2, MAPRE1 and possibly with AXIN2. As to expression, expressed in brain and other neural tissues.

Its subcellular location is the cytoplasm. It is found in the cytoskeleton. It localises to the golgi apparatus. The protein localises to the perinuclear region. Its function is as follows. Stabilizes microtubules and may regulate actin fiber dynamics through the activation of Rho family GTPases. May also function in Wnt signaling by promoting the rapid degradation of CTNNB1. The chain is Adenomatous polyposis coli protein 2 (Apc2) from Mus musculus (Mouse).